The sequence spans 373 residues: MPGWSCLVTGAGGFLGQRIIQLLVQEEDLEEIRVLDKVFRPETRKEFFNLETSIKVTVLEGDILDTQYLRRACQGISVVIHTAAIIDVTGVIPRQTILDVNLKGTQNLLEACIQASVPAFIFSSSVDVAGPNSYKEIVLNGHEEECHESTWSDPYPYSKKMAEKAVLAANGSMLKNGGTLQTCALRPMCIYGERSPLISNIIIMALKHKGILRSFGKFNTANPVYVGNVAWAHILAARGLRDPKKSPNIQGEFYYISDDTPHQSFDDISYTLSKEWGFCLDSSWSLPVPLLYWLAFLLETVSFLLSPIYRYIPPFNRHLVTLSGSTFTFSYKKAQRDLGYEPLVSWEEAKQKTSEWIGTLVEQHRETLDTKSQ.

Y155 functions as the Proton acceptor in the catalytic mechanism. Residue K159 participates in NAD(+) binding. Residues 288 to 308 traverse the membrane as a helical segment; sequence VPLLYWLAFLLETVSFLLSPI.

Belongs to the 3-beta-HSD family. In terms of tissue distribution, liver and kidney.

The protein localises to the endoplasmic reticulum membrane. It is found in the mitochondrion membrane. The enzyme catalyses a 3beta-hydroxy-Delta(5)-steroid + NAD(+) = a 3-oxo-Delta(5)-steroid + NADH + H(+). It carries out the reaction a 3-oxo-Delta(5)-steroid = a 3-oxo-Delta(4)-steroid. The catalysed reaction is pregnenolone + NAD(+) = pregn-5-ene-3,20-dione + NADH + H(+). It catalyses the reaction pregn-5-ene-3,20-dione = progesterone. The enzyme catalyses 3beta-hydroxyandrost-5-en-17-one + NAD(+) = androst-5-ene-3,17-dione + NADH + H(+). It carries out the reaction androst-5-ene-3,17-dione = androst-4-ene-3,17-dione. The protein operates within lipid metabolism; steroid biosynthesis. In terms of biological role, 3-beta-HSD is a bifunctional enzyme, that catalyzes the oxidative conversion of Delta(5)-ene-3-beta-hydroxy steroid, and the oxidative conversion of ketosteroids. The 3-beta-HSD enzymatic system plays a crucial role in the biosynthesis of all classes of hormonal steroids. This chain is 3 beta-hydroxysteroid dehydrogenase/Delta 5--&gt;4-isomerase type 2, found in Mus musculus (Mouse).